Here is a 465-residue protein sequence, read N- to C-terminus: Argininosuccinate lyase (465 aa).

Belongs to the lyase 1 family. Argininosuccinate lyase subfamily.

The protein localises to the cytoplasm. It carries out the reaction 2-(N(omega)-L-arginino)succinate = fumarate + L-arginine. It participates in amino-acid biosynthesis; L-arginine biosynthesis; L-arginine from L-ornithine and carbamoyl phosphate: step 3/3. The protein is Argininosuccinate lyase of Rhodopseudomonas palustris (strain ATCC BAA-98 / CGA009).